The chain runs to 102 residues: Small ribosomal subunit protein uS10 (102 aa).

The protein belongs to the universal ribosomal protein uS10 family. In terms of assembly, part of the 30S ribosomal subunit.

Its function is as follows. Involved in the binding of tRNA to the ribosomes. The polypeptide is Small ribosomal subunit protein uS10 (Staphylococcus aureus (strain Mu3 / ATCC 700698)).